The sequence spans 582 residues: Heat shock protein 60, mitochondrial (582 aa).

Residues 1–35 (MVSFLSSSVSRLPLRIAGRRIPGRFAVPQVRTYAK) constitute a mitochondrion transit peptide. Phosphoserine occurs at positions 77 and 92. Positions 561–582 (EESKAPAGPPGMGGMGGMPGMM) are disordered. Gly residues predominate over residues 570 to 582 (PGMGGMGGMPGMM).

This sequence belongs to the chaperonin (HSP60) family.

The protein resides in the mitochondrion. Functionally, may participate in assembly and/or disassembly of proteins imported into the mitochondrion. HSP60 are ATPases and have affinity for unfolded proteins. The protein is Heat shock protein 60, mitochondrial (hsp60) of Schizosaccharomyces pombe (strain 972 / ATCC 24843) (Fission yeast).